The following is a 501-amino-acid chain: Solute carrier family 2, facilitated glucose transporter member 5 (501 aa).

At Met-1 the chain carries N-acetylmethionine. The Cytoplasmic segment spans residues 1–18 (MEPQDPVKREGRLTPVIV). A helical membrane pass occupies residues 19–39 (LATLIAAFGSSFQYGYNVAAI). D-fructose is bound at residue Tyr-32. Residues 40–68 (NSPSEFMKDFYNYTYYDRVGEYMNEFYLT) lie on the Extracellular side of the membrane. Asn-51 carries an N-linked (GlcNAc...) asparagine glycan. A helical membrane pass occupies residues 69-91 (LLWSVTVSMFPFGGFLGSLMVGP). Residues 92 to 98 (LVNNLGR) are Cytoplasmic-facing. The chain crosses the membrane as a helical span at residues 99–119 (KGTLLFNNIFSIVPALLMGFS). Over 120–126 (ELAKSFE) the chain is Extracellular. The helical transmembrane segment at 127-149 (MIIVARVLVGICAGLSSNVVPMY) threads the bilayer. Residues 150–161 (LGELAPKNWRGA) lie on the Cytoplasmic side of the membrane. A helical transmembrane segment spans residues 162 to 182 (LGVVPQLFITIGILVAQIFGL). Position 167 (Gln-167) interacts with D-fructose. Residues 183–192 (RSLLANEEGW) lie on the Extracellular side of the membrane. Residues 193–213 (PILLGLTGIPAVLQLLFLPFF) traverse the membrane as a helical segment. Residues 214-277 (PESPRYLLIQ…LFKMRSLRWQ (64 aa)) lie on the Cytoplasmic side of the membrane. The chain crosses the membrane as a helical span at residues 278–298 (VISIIVLMAGQQLSGVNAIYY). D-fructose-binding positions include Gln-288 and 296-298 (IYY). At 299-313 (YADQIYLSAGVNEDD) the chain is on the extracellular side. A helical membrane pass occupies residues 314-334 (VQYVTAGTGAVNVLITVCAIF). Over 335–342 (VVELMGRR) the chain is Cytoplasmic. Residues 343 to 363 (FLLLLGFSVCFTACCVLTGAL) traverse the membrane as a helical segment. Over 364 to 371 (ALQDVISW) the chain is Extracellular. A helical membrane pass occupies residues 372–394 (MPYVSIACVISYVIGHALGPSPI). His-387 contributes to the D-fructose binding site. Residues 395-412 (PALLVTEIFLQSSRPAAY) are Cytoplasmic-facing. Residues 413–433 (MVAGTVHWLSNFTVGLVFPFI) traverse the membrane as a helical segment. A D-fructose-binding site is contributed by 419-420 (HW). Residues 434 to 439 (QVGLGA) are Extracellular-facing. A helical membrane pass occupies residues 440–460 (YSFVIFAVICLLTTVYIFLII). Topologically, residues 461–501 (PETKSKTFIEINRIFIKMNKVPGVHPEKEELKEFPPSTARQ) are cytoplasmic.

The protein belongs to the major facilitator superfamily. Sugar transporter (TC 2.A.1.1) family. Glucose transporter subfamily.

It localises to the apical cell membrane. Its subcellular location is the cell membrane. It is found in the sarcolemma. It catalyses the reaction D-fructose(out) = D-fructose(in). Functions as a fructose transporter that has only low activity with other monosaccharides. Can mediate the uptake of deoxyglucose, but with low efficiency. Essential for fructose uptake in the small intestine. Plays a role in the regulation of salt uptake and blood pressure in response to dietary fructose. Required for the development of high blood pressure in response to high dietary fructose intake. This chain is Solute carrier family 2, facilitated glucose transporter member 5, found in Bos taurus (Bovine).